The primary structure comprises 382 residues: Gibberellin 2-beta-dioxygenase 1 (382 aa).

One can recognise a Fe2OG dioxygenase domain in the interval 189-321 (DSDCLLRINH…RLSTIYFASP (133 aa)). 2-oxoglutarate is bound at residue Tyr-199. Fe cation contacts are provided by His-241, Asp-243, and His-302. 2-oxoglutarate-binding residues include Arg-312 and Ser-314.

This sequence belongs to the iron/ascorbate-dependent oxidoreductase family. GA2OX subfamily. L-ascorbate is required as a cofactor. The cofactor is Fe(2+). Expressed in roots, shoot apex, and in the basal region of leaf primordia and young leaves.

It catalyses the reaction gibberellin A1 + 2-oxoglutarate + O2 = gibberellin A8 + succinate + CO2. In terms of biological role, catalyzes the 2-beta-hydroxylation of several biologically active gibberellins, leading to the homeostatic regulation of their endogenous level. Catabolism of gibberellins (GAs) plays a central role in plant development. Controls the level of bioactive GAs in the shoot apical meristem, which regulates the vegetative to reproductive phase transition. In vitro, converts GA1, GA4, GA9, GA20, and GA44 to the corresponding 2-beta-hydroxylated products GA8, GA34, GA51, GA29, and GA98, respectively. This chain is Gibberellin 2-beta-dioxygenase 1, found in Oryza sativa subsp. japonica (Rice).